The sequence spans 811 residues: MEQREDHTKSSEPAFIPSKRTHQMRNIWAWGGPSSTTVNGSSDAVLFSSSLPSVLQFGKLPGKEREYNAQPKDDMFPMMKQPGTNARVADPMDDVAQHLIGNLLPDDEELLAGVIEDFDHVKLRTQVEESEEYDVFRNSGGMELDIDPLESITFGTAKASLVNGTGSSTNQYSIQNGAGTVTGEHPYGEHPSRTLFVRNINSNVEDSELRSLFEPFGDIRSMYTATKHRGFVMISYYDIRHARNAKTALQSKPLRRRKLDIHYSIPKENPSDKDMNQGTLVIFNLEPAVSNEELLQIFGAFGEVREIRETPHKRHHRFIEFYDVRAAESALRSLNKSDIAGKRVKLEPSRPGGARRSFIQHFNHEFEQDETKHNSFQIGSPSANSPPSLWSQLGSPTDENKLNALNETAFNGGMSPLGSNHLSGFSSGYPPMKSPVGKSSYWNNRADNIFHGSPTLHNSHSFPEHHGGIISASPLVSSAASSASTASGFTALTGTSFLWGNNNNLRDHGQPSSIQSQALSNSLFPNNQPQRQSNLYQNLRGSFGASEHFSQFNVGSAPSVFPFESNFGYFSDSPDTSYMRQGKFGGTGPTRVSGSLMTNFGAYPRINVASMQNGSVGFEGLLDRGRNQTVGNSGCQEDSRVQYQLDLEKIIAGKDTRTTLMIKNIPNKYTSNMLLEVIDETHEGTYDFFYLPIDFKNKCNVGYAFINMASPGYIVSFFKAFAGRKWEKFNSEKVVSLAYARIQGKAALVNHFQNSSLMNEDKRCRPMLFDPKHTENNNQILLNGIFISMAQQDATQERHDLPENPREDNFS.

2 RRM domains span residues R193–P266 and G278–P351. The segment at T371 to T397 is disordered. Polar residues predominate over residues N374–T397.

In terms of biological role, probable RNA-binding protein that may play a role in growth regulation. The chain is Protein MEI2-like 5 (ML5) from Oryza sativa subsp. japonica (Rice).